Consider the following 354-residue polypeptide: Virulence plasmid protein pGP2-D (354 aa).

In Chlamydia trachomatis serovar L2 (strain ATCC VR-902B / DSM 19102 / 434/Bu), this protein is Virulence plasmid protein pGP2-D.